The primary structure comprises 321 residues: D-alanine--D-alanine ligase (321 aa).

In terms of domain architecture, ATP-grasp spans 121–315 (RSWFLTNNIN…FVNLIEEILK (195 aa)). 148–199 (IKRPYVIKPFTQGSSIGVEVIFEEDDFNFANYDFPYGDEVIIEKYIKGRELQ) is a binding site for ATP. Residues glutamate 268, glutamate 282, and asparagine 284 each contribute to the Mg(2+) site.

This sequence belongs to the D-alanine--D-alanine ligase family. Mg(2+) is required as a cofactor. Requires Mn(2+) as cofactor.

It localises to the cytoplasm. It catalyses the reaction 2 D-alanine + ATP = D-alanyl-D-alanine + ADP + phosphate + H(+). Its pathway is cell wall biogenesis; peptidoglycan biosynthesis. Cell wall formation. The polypeptide is D-alanine--D-alanine ligase (Rickettsia bellii (strain OSU 85-389)).